Reading from the N-terminus, the 688-residue chain is Methionine--tRNA ligase (688 aa).

The 'HIGH' region motif lies at 13-23 (PYANGQIHIGH). Positions 144, 147, 157, and 160 each coordinate Zn(2+). The 'KMSKS' region signature appears at 335-339 (KMSKS). An ATP-binding site is contributed by lysine 338. Positions 582–688 (DFAKIDLRVA…SGAVPGMRIG (107 aa)) constitute a tRNA-binding domain.

It belongs to the class-I aminoacyl-tRNA synthetase family. MetG type 1 subfamily. Homodimer. It depends on Zn(2+) as a cofactor.

It is found in the cytoplasm. The catalysed reaction is tRNA(Met) + L-methionine + ATP = L-methionyl-tRNA(Met) + AMP + diphosphate. Is required not only for elongation of protein synthesis but also for the initiation of all mRNA translation through initiator tRNA(fMet) aminoacylation. This chain is Methionine--tRNA ligase, found in Cupriavidus pinatubonensis (strain JMP 134 / LMG 1197) (Cupriavidus necator (strain JMP 134)).